Here is a 735-residue protein sequence, read N- to C-terminus: Dolichyl-diphosphooligosaccharide--protein glycosyltransferase subunit STT3B (735 aa).

Topologically, residues 1–38 are cytoplasmic; it reads MGGKSEPAKSESMATKPDLLNTSFFSFKSLKLKTKQQE. The chain crosses the membrane as a helical span at residues 39–59; that stretch reads LLLRISILGLVYILAFIARLF. At 60 to 142 the chain is on the lumenal side; sequence SVLRYESMIH…VHIREVCVLT (83 aa). Residues 70–72 carry the DXD motif 1 motif; the sequence is EFD. Residue Asp-72 coordinates Mn(2+). The chain crosses the membrane as a helical span at residues 143–161; it reads APFFASNTTLVAYFFGKEL. The Cytoplasmic portion of the chain corresponds to 162–163; it reads WD. A helical transmembrane segment spans residues 164–181; sequence TGAGLVAAVLIAICPGYI. Residues 182–192 lie on the Lumenal side of the membrane; the sequence is SRSVAGSYDNE. Residues Asp-190 and Glu-192 each coordinate Mn(2+). Residues 190–192 carry the DXD motif 2 motif; the sequence is DNE. The chain crosses the membrane as a helical span at residues 193-212; the sequence is AVAIFALLLTFYLFVKAVNT. Residues 213–214 lie on the Cytoplasmic side of the membrane; the sequence is GS. Residues 215 to 229 traverse the membrane as a helical segment; sequence LAWALASAFGYFYMV. Residues 230 to 234 lie on the Lumenal side of the membrane; the sequence is SAWGG. A helical transmembrane segment spans residues 235–251; it reads YVFIINLVPLYVLVLLI. Residues 252-256 lie on the Cytoplasmic side of the membrane; that stretch reads TGRYS. Residues 257–282 traverse the membrane as a helical segment; that stretch reads MRLYIAYNCMYILGMLLAMQIRFVGF. Residues 283–290 are Lumenal-facing; it reads QHVQSGEH. The chain crosses the membrane as a helical span at residues 291–310; that stretch reads MGAMGVFLLMQVFYFLDWVK. Residues 311-326 lie on the Cytoplasmic side of the membrane; that stretch reads YQLNDTKLFQTFLRIT. The chain crosses the membrane as a helical span at residues 327-347; the sequence is VTSAILVGGVAVGVGTASGYI. Topologically, residues 348–380 are lumenal; it reads SPWTGRFYSLLDPTYAKDHIPIIASVSEHQPTA. The SVSE motif signature appears at 372–375; that stretch reads SVSE. The chain crosses the membrane as a helical span at residues 381–403; sequence WSSFMFDYHILLFLFPAGLYFCF. The Cytoplasmic segment spans residues 404–409; it reads KRLTDA. A helical transmembrane segment spans residues 410-426; sequence TIFIVMYGLTSLYFAGV. The Lumenal portion of the chain corresponds to 427-430; it reads MVRL. Arg-429 lines the dolichyl diphosphooligosaccharide pocket. Residues 431–452 form a helical membrane-spanning segment; that stretch reads ILVATPAVCLISAIAVSATIKN. The Cytoplasmic segment spans residues 453–494; the sequence is LTSLLRTKQKVSQTGSTKGAGSSKASSKVTLDQSQPFQKNGA. Residues 495-515 form a helical membrane-spanning segment; it reads IALLVGVFYLLSRYAIHCTWV. Topologically, residues 516 to 735 are lumenal; sequence TAEAYSSPSI…YRVKPPTNRL (220 aa). The interacts with target acceptor peptide in protein substrate stretch occupies residues 562–564; that stretch reads WWD. The WWDYG motif motif lies at 562 to 566; sequence WWDYG. Tyr-567 contributes to the dolichyl diphosphooligosaccharide binding site. Asn-574 and Asn-581 each carry an N-linked (GlcNAc...) asparagine glycan. Asn-585 carries an N-linked (GlcNAc...) (high mannose) asparagine glycan. A DK motif motif is present at residues 629-636; the sequence is DINKFLWM.

Belongs to the STT3 family. Component of the oligosaccharyltransferase (OST) complex. Mg(2+) is required as a cofactor. Mn(2+) serves as cofactor. In terms of tissue distribution, expressed preferentially in the root but also in the shoot.

It localises to the endoplasmic reticulum membrane. It catalyses the reaction a di-trans,poly-cis-dolichyl diphosphooligosaccharide + L-asparaginyl-[protein] = N(4)-(oligosaccharide-(1-&gt;4)-N-acetyl-beta-D-glucosaminyl-(1-&gt;4)-N-acetyl-beta-D-glucosaminyl)-L-asparaginyl-[protein] + a di-trans,poly-cis-dolichyl diphosphate + H(+). It functions in the pathway protein modification; protein glycosylation. Its function is as follows. Catalytic subunit of the oligosaccharyl transferase (OST) complex that catalyzes the initial transfer of a defined glycan (Glc(3)Man(9)GlcNAc(2) in eukaryotes) from the lipid carrier dolichol-pyrophosphate to an asparagine residue within an Asn-X-Ser/Thr consensus motif in nascent polypeptide chains, the first step in protein N-glycosylation. N-glycosylation occurs cotranslationally and the complex associates with the Sec61 complex at the channel-forming translocon complex that mediates protein translocation across the endoplasmic reticulum (ER). All subunits are required for a maximal enzyme activity. This subunit contains the active site and the acceptor peptide and donor lipid-linked oligosaccharide (LLO) binding pockets. The chain is Dolichyl-diphosphooligosaccharide--protein glycosyltransferase subunit STT3B (STT3B) from Arabidopsis thaliana (Mouse-ear cress).